The sequence spans 242 residues: N-alpha-acetyltransferase 60 (242 aa).

The Cytoplasmic portion of the chain corresponds to 1-192 (MTEAVPSSAL…GGHPPWTILD (192 aa)). An N-acetyltransferase domain is found at 13–182 (VSLRLLCHDD…DGFTYVLYIN (170 aa)). Y38 is a substrate binding site. K79 is modified (N6-acetyllysine; by autocatalysis). The active site involves Y97. Position 99 (L99) interacts with substrate. 101–103 (LGV) serves as a coordination point for acetyl-CoA. 3 positions are modified to N6-acetyllysine; by autocatalysis: K105, K109, and K121. 109 to 114 (KHGIGS) lines the acetyl-CoA pocket. H138 is an active-site residue. Residues N143 and 150-153 (YENR) contribute to the acetyl-CoA site. K156 is modified (N6-acetyllysine; by autocatalysis). The segment at 162 to 173 (PYYYSIRGVLKD) is required for homodimerization. A substrate-binding site is contributed by Y165. An intramembrane region (helical) is located at residues 193 to 236 (YIQHLGSALANLSPCSIPHRIYRQAQSLLCSFLPWSSISTKGGI). Residues 237–242 (EYSRTM) are Cytoplasmic-facing.

Belongs to the acetyltransferase family. NAA60 subfamily. As to quaternary structure, monomer and homodimer; monomer in presence of substrate and homodimer in its absence. Acetylated: autoacetylation is required for optimal acetyltransferase activity.

The protein resides in the golgi apparatus membrane. The catalysed reaction is N-terminal L-methionyl-[transmembrane protein] + acetyl-CoA = N-terminal N(alpha)-acetyl-L-methionyl-[transmembrane protein] + CoA + H(+). The enzyme catalyses L-lysyl-[protein] + acetyl-CoA = N(6)-acetyl-L-lysyl-[protein] + CoA + H(+). N-alpha-acetyltransferase that specifically mediates the acetylation of N-terminal residues of the transmembrane proteins, with a strong preference for N-termini facing the cytosol. Displays N-terminal acetyltransferase activity towards a range of N-terminal sequences including those starting with Met-Lys, Met-Val, Met-Ala and Met-Met. Required for normal chromosomal segregation during anaphase. May also show histone acetyltransferase activity; such results are however unclear in vivo and would require additional experimental evidences. This is N-alpha-acetyltransferase 60 (NAA60) from Bos taurus (Bovine).